The primary structure comprises 380 residues: Erythronate-4-phosphate dehydrogenase (380 aa).

Residues Ser-45 and Thr-66 each coordinate substrate. NAD(+) contacts are provided by residues Gln-126–Val-127, Asp-146, Thr-175, Ala-206–Arg-208, and Asp-232. The active site involves Arg-208. Glu-237 is a catalytic residue. The active-site Proton donor is the His-254. Gly-257 provides a ligand contact to NAD(+). Substrate is bound at residue Tyr-258.

The protein belongs to the D-isomer specific 2-hydroxyacid dehydrogenase family. PdxB subfamily. In terms of assembly, homodimer.

Its subcellular location is the cytoplasm. The catalysed reaction is 4-phospho-D-erythronate + NAD(+) = (R)-3-hydroxy-2-oxo-4-phosphooxybutanoate + NADH + H(+). It participates in cofactor biosynthesis; pyridoxine 5'-phosphate biosynthesis; pyridoxine 5'-phosphate from D-erythrose 4-phosphate: step 2/5. Catalyzes the oxidation of erythronate-4-phosphate to 3-hydroxy-2-oxo-4-phosphonooxybutanoate. This is Erythronate-4-phosphate dehydrogenase from Pseudomonas paraeruginosa (strain DSM 24068 / PA7) (Pseudomonas aeruginosa (strain PA7)).